Here is a 311-residue protein sequence, read N- to C-terminus: Aquaporin-1 (311 aa).

Over 1-16 the chain is Cytoplasmic; it reads MHPQVASLFDNVYEDL. A helical membrane pass occupies residues 17–37; sequence AAATLEFIGTAFFLLFGLGGI. The Extracellular segment spans residues 38-56; the sequence is QASTAEDTASSQPPASGIE. A helical membrane pass occupies residues 57–77; the sequence is HVLYISTCMGFSLVVSAWLFF. Position 78 (R78) is a topological domain, cytoplasmic. The helical transmembrane segment at 79–99 threads the bilayer; the sequence is VTGGLFNPNISFALLLVGGLK. The short motif at 85–87 is the NPA 1 element; it reads NPN. Residue P100 is a topological domain, extracellular. The chain crosses the membrane as a helical span at residues 101–121; it reads LRFVLFCIAQLTGAIAGAAIV. At 122-143 the chain is on the cytoplasmic side; it reads RGLTSAPLSVNNVLQQGTSAAQ. The helical transmembrane segment at 144-164 threads the bilayer; that stretch reads GVFIEMFITAALVLSVLMLAA. Residues 165 to 168 lie on the Extracellular side of the membrane; that stretch reads EKHE. A helical transmembrane segment spans residues 169 to 189; the sequence is ATPFAPVGIGLTLFACHLFAV. Topologically, residues 190–215 are cytoplasmic; the sequence is YYTGAAMNSARAFGPAVISGFPEPQH. Residues 197–199 carry the NPA 2 motif; the sequence is NSA. A helical transmembrane segment spans residues 216–236; it reads WVYWVGPFLGSLLGAGFYATL. Residues 237-311 are Extracellular-facing; that stretch reads KHYKYWRLNP…TSSRTNFSPV (75 aa). A disordered region spans residues 276 to 311; that stretch reads DEETRNGCASNEEGVRATGDEKSSNATSSRTNFSPV. Positions 288–298 are enriched in basic and acidic residues; that stretch reads EGVRATGDEKS. Residues 299–311 are compositionally biased toward polar residues; the sequence is SNATSSRTNFSPV. The N-linked (GlcNAc...) asparagine glycan is linked to N300.

The protein belongs to the MIP/aquaporin (TC 1.A.8) family.

The protein localises to the cell membrane. The enzyme catalyses H2O(in) = H2O(out). The catalysed reaction is H2O2(out) = H2O2(in). It catalyses the reaction nitric oxide(out) = nitric oxide(in). It carries out the reaction CO2(out) = CO2(in). Its function is as follows. Water channel required to facilitate the transport of water across membranes. Also mediates the transport nitric oxide, hydrogen peroxide and carbon dioxide across the membrane. Required for Hartig net development in trembling aspen trees. Contributes in fungal cellular processes during the basidiocarp formation. This Laccaria bicolor (Bicoloured deceiver) protein is Aquaporin-1.